A 108-amino-acid chain; its full sequence is UPF0102 protein Sden_0272 (108 aa).

Belongs to the UPF0102 family.

The chain is UPF0102 protein Sden_0272 from Shewanella denitrificans (strain OS217 / ATCC BAA-1090 / DSM 15013).